A 267-amino-acid chain; its full sequence is 5'-nucleotidase SurE (267 aa).

The a divalent metal cation site is built by D9, D10, S40, and N97.

It belongs to the SurE nucleotidase family. The cofactor is a divalent metal cation.

It localises to the cytoplasm. It catalyses the reaction a ribonucleoside 5'-phosphate + H2O = a ribonucleoside + phosphate. Nucleotidase that shows phosphatase activity on nucleoside 5'-monophosphates. This is 5'-nucleotidase SurE from Helicobacter pylori (strain ATCC 700392 / 26695) (Campylobacter pylori).